A 287-amino-acid chain; its full sequence is Probable endoribonuclease YicC (287 aa).

The protein belongs to the YicC/YloC family. The cofactor is a divalent metal cation.

Its function is as follows. Probably a ssRNA endonuclease. Might contribute to small RNA (sRNA) regulation. The chain is Probable endoribonuclease YicC from Haemophilus influenzae (strain ATCC 51907 / DSM 11121 / KW20 / Rd).